The following is a 212-amino-acid chain: ATP phosphoribosyltransferase (212 aa).

The protein belongs to the ATP phosphoribosyltransferase family. Short subfamily. As to quaternary structure, heteromultimer composed of HisG and HisZ subunits.

It localises to the cytoplasm. It carries out the reaction 1-(5-phospho-beta-D-ribosyl)-ATP + diphosphate = 5-phospho-alpha-D-ribose 1-diphosphate + ATP. Its pathway is amino-acid biosynthesis; L-histidine biosynthesis; L-histidine from 5-phospho-alpha-D-ribose 1-diphosphate: step 1/9. In terms of biological role, catalyzes the condensation of ATP and 5-phosphoribose 1-diphosphate to form N'-(5'-phosphoribosyl)-ATP (PR-ATP). Has a crucial role in the pathway because the rate of histidine biosynthesis seems to be controlled primarily by regulation of HisG enzymatic activity. The chain is ATP phosphoribosyltransferase from Geobacter metallireducens (strain ATCC 53774 / DSM 7210 / GS-15).